The primary structure comprises 195 residues: MAYGTRYPTLAFHTGGIGESDDGMPPQPFETFCYDSALLQAKIENFNIVPYTSVLPKELFGNIVPVDTCVKSFKHGAVLEVIMAGRGAALSDGTHAIATGIGICWGKDKNGELIGGWAAEYVEFFPTWINDEIAETHAKMWLKKSLQHELDLRSIAKHSEFQFFHNYINIKQKFGFCLTALGFLNFENAEPAKVN.

Ser-53 is modified (pyruvic acid (Ser)).

It belongs to the pyruvoyl-dependent arginine decarboxylase family. In terms of assembly, trimer of an alpha-beta dimer. Pyruvate is required as a cofactor.

It is found in the cytoplasm. It carries out the reaction L-arginine + H(+) = agmatine + CO2. Its activity is regulated as follows. Inhibited by argininamide. In terms of biological role, part of the AaxABC system, catalyzes the decarboxylation of L-arginine. The arginine uptake by the bacterium in the macrophage may be a virulence factor against the host innate immune response. The protein is Pyruvoyl-dependent arginine decarboxylase AaxB (aaxB) of Chlamydia pneumoniae (Chlamydophila pneumoniae).